We begin with the raw amino-acid sequence, 229 residues long: Demethylmenaquinone methyltransferase (229 aa).

Residues threonine 58, aspartate 78, and aspartate 100–alanine 101 contribute to the S-adenosyl-L-methionine site.

The protein belongs to the class I-like SAM-binding methyltransferase superfamily. MenG/UbiE family.

It carries out the reaction a 2-demethylmenaquinol + S-adenosyl-L-methionine = a menaquinol + S-adenosyl-L-homocysteine + H(+). It functions in the pathway quinol/quinone metabolism; menaquinone biosynthesis; menaquinol from 1,4-dihydroxy-2-naphthoate: step 2/2. In terms of biological role, methyltransferase required for the conversion of demethylmenaquinol (DMKH2) to menaquinol (MKH2). In Thermotoga maritima (strain ATCC 43589 / DSM 3109 / JCM 10099 / NBRC 100826 / MSB8), this protein is Demethylmenaquinone methyltransferase.